We begin with the raw amino-acid sequence, 59 residues long: Large ribosomal subunit protein uL30 (59 aa).

The protein belongs to the universal ribosomal protein uL30 family. As to quaternary structure, part of the 50S ribosomal subunit.

This is Large ribosomal subunit protein uL30 from Rhodococcus jostii (strain RHA1).